The primary structure comprises 89 residues: Cell division topological specificity factor (89 aa).

The protein belongs to the MinE family.

Prevents the cell division inhibition by proteins MinC and MinD at internal division sites while permitting inhibition at polar sites. This ensures cell division at the proper site by restricting the formation of a division septum at the midpoint of the long axis of the cell. The polypeptide is Cell division topological specificity factor (Edwardsiella ictaluri (strain 93-146)).